Here is a 409-residue protein sequence, read N- to C-terminus: Nucleoprotein (409 aa).

Disordered stretches follow at residues 1 to 32 (MASG…SSGN), 46 to 68 (IPPP…SQQH), 164 to 196 (RSGR…EDDL), and 238 to 258 (VDQV…DDKM). Residues 15 to 31 (PVIKLGGPKPPKVGSSG) are compositionally biased toward low complexity. The segment at 29 to 160 (SSGNASWFQA…GNFRWDFIPL (132 aa)) is RNA-binding. In terms of domain architecture, CoV N NTD spans 31 to 156 (GNASWFQAIK…GGPDGNFRWD (126 aa)). A compositionally biased stretch (low complexity) spans 166-179 (GRSTAASSAASSRA). Composition is skewed to basic and acidic residues over residues 180–192 (PSRE…RSGS) and 247–258 (KGKEGNFGDDKM). Serine 190 and serine 192 each carry phosphoserine; by host. A CoV N CTD domain is found at 215–331 (TKAKADEMAH…QCVDGVGTRP (117 aa)). Residues 226 to 333 (RYCKRTIPPN…VDGVGTRPKD (108 aa)) form a dimerization region. Cysteine 320 and cysteine 323 are joined by a disulfide. The disordered stretch occupies residues 326 to 409 (GVGTRPKDDE…GDAALGENEL (84 aa)). Positions 358 to 367 (QRPKKEKKPK) are enriched in basic residues. A compositionally biased stretch (basic and acidic residues) spans 368–384 (KHDDEVDKALTSDEERN). Phosphothreonine; by host is present on threonine 378. At serine 379 the chain carries Phosphoserine; by host.

Belongs to the gammacoronavirus nucleocapsid protein family. Homooligomer. Both monomeric and oligomeric forms interact with RNA. Interacts with protein M. Interacts with NSP3; this interaction serves to tether the genome to the newly translated replicase-transcriptase complex at a very early stage of infection. In terms of processing, ADP-ribosylated. The ADP-ribosylation is retained in the virion during infection. Post-translationally, phosphorylated on serine and threonine residues.

Its subcellular location is the virion. The protein localises to the host endoplasmic reticulum-Golgi intermediate compartment. It is found in the host Golgi apparatus. Functionally, packages the positive strand viral genome RNA into a helical ribonucleocapsid (RNP) and plays a fundamental role during virion assembly through its interactions with the viral genome and membrane protein M. Plays an important role in enhancing the efficiency of subgenomic viral RNA transcription as well as viral replication. The sequence is that of Nucleoprotein from Avian infectious bronchitis virus (strain M41) (IBV).